Here is a 194-residue protein sequence, read N- to C-terminus: NADH-quinone oxidoreductase subunit B (194 aa).

Positions 73, 74, 138, and 168 each coordinate [4Fe-4S] cluster.

This sequence belongs to the complex I 20 kDa subunit family. In terms of assembly, NDH-1 is composed of 14 different subunits. Subunits NuoB, C, D, E, F, and G constitute the peripheral sector of the complex. [4Fe-4S] cluster is required as a cofactor.

The protein resides in the cell inner membrane. The enzyme catalyses a quinone + NADH + 5 H(+)(in) = a quinol + NAD(+) + 4 H(+)(out). In terms of biological role, NDH-1 shuttles electrons from NADH, via FMN and iron-sulfur (Fe-S) centers, to quinones in the respiratory chain. The immediate electron acceptor for the enzyme in this species is believed to be ubiquinone. Couples the redox reaction to proton translocation (for every two electrons transferred, four hydrogen ions are translocated across the cytoplasmic membrane), and thus conserves the redox energy in a proton gradient. The sequence is that of NADH-quinone oxidoreductase subunit B from Rhizobium leguminosarum bv. trifolii (strain WSM2304).